A 205-amino-acid polypeptide reads, in one-letter code: Holliday junction branch migration complex subunit RuvA (205 aa).

The domain I stretch occupies residues 1 to 65 (MIAKLKGILD…EDRIHLFGFL (65 aa)). A domain II region spans residues 66–144 (DNTEKVAFNM…NINTIANNTS (79 aa)). The flexible linker stretch occupies residues 145–153 (LAILSTDSN). A domain III region spans residues 154 to 205 (THDNILSDAITALIALGISRAEATQILSDIYALFPSISVNELVRTALQRRAK).

It belongs to the RuvA family. As to quaternary structure, homotetramer. Forms an RuvA(8)-RuvB(12)-Holliday junction (HJ) complex. HJ DNA is sandwiched between 2 RuvA tetramers; dsDNA enters through RuvA and exits via RuvB. An RuvB hexamer assembles on each DNA strand where it exits the tetramer. Each RuvB hexamer is contacted by two RuvA subunits (via domain III) on 2 adjacent RuvB subunits; this complex drives branch migration. In the full resolvosome a probable DNA-RuvA(4)-RuvB(12)-RuvC(2) complex forms which resolves the HJ.

The protein resides in the cytoplasm. Functionally, the RuvA-RuvB-RuvC complex processes Holliday junction (HJ) DNA during genetic recombination and DNA repair, while the RuvA-RuvB complex plays an important role in the rescue of blocked DNA replication forks via replication fork reversal (RFR). RuvA specifically binds to HJ cruciform DNA, conferring on it an open structure. The RuvB hexamer acts as an ATP-dependent pump, pulling dsDNA into and through the RuvAB complex. HJ branch migration allows RuvC to scan DNA until it finds its consensus sequence, where it cleaves and resolves the cruciform DNA. This Orientia tsutsugamushi (strain Boryong) (Rickettsia tsutsugamushi) protein is Holliday junction branch migration complex subunit RuvA.